Here is a 227-residue protein sequence, read N- to C-terminus: Uracil-DNA glycosylase (227 aa).

Aspartate 68 functions as the Proton acceptor in the catalytic mechanism.

It belongs to the uracil-DNA glycosylase (UDG) superfamily. UNG family.

It is found in the cytoplasm. It carries out the reaction Hydrolyzes single-stranded DNA or mismatched double-stranded DNA and polynucleotides, releasing free uracil.. Functionally, excises uracil residues from the DNA which can arise as a result of misincorporation of dUMP residues by DNA polymerase or due to deamination of cytosine. This Mycobacterium ulcerans (strain Agy99) protein is Uracil-DNA glycosylase.